The sequence spans 1485 residues: MDEKPAVSESSNGSDVDSLSTASAYEQHRERLRDANPQGVTSHRSGVNVKEAEEEFSELNRQFSTISHQAHCLSKQISRASKPTGKTEDVERSDSPADSDEPWDLETALRGNRDAETAAGIRSKRIGVIWDNLTVRGMGGVKTYIKTFPDAIIDFFNVPETIMHMLGYGKKGKEFEILRNFRGVLQPGEMVLVLGRPGSGCTTFLKTITNQRFGYTSIDGDVLYGIFDADTFAKRFRGEAVYNQEDDVHQPTLTVKQTLGFALDTKTPGKRPLGVSKAEFREKVINMLLKMFNIEHTANTVIGNQFIRGVSGGERRRVSIAEMMITSATVLAWDNSTRGLDASTALDFAKSLRIMTNIYKTTTFVSLYQASENIYKQFDKVLVIDSGRQVFFGPASEARSYFESLGFKERPRQTTPDYLTGCTDPFEREFKEGRSEDDVPSTPDSLVEAFNRSSYSERLAQEMDAYRKKLEQEKHVYEDFEIANQEAKRKFTPKSSVYSIPFHLQIWALMQRQFLIKWQDRFAQTVSWITSTGVAIILGTVWLRLPKTSAGAFTRGGLLFISLLFNGFQAFSELVSTMMGRSIVNKHRQFTFYRPSALWIAQILVDTTFAIARILVFSIIVYFMCGLVLDAGAFFTFILIIVLGYLCMTCFFRVIGCMSPDFDYAMKFASVVITLFVLTSGYLIQWSSEQEWLRWLYYINPFGLGFAALMVNEFKDLTMTCTADSLVPSGPGYDDMASRVCTLAGGEPGSVIIPGASYLAKTFSYFPGDLWRNFGIMVALTVGFLTLNLYHGETLQFGAGGRTVTFYQKENKERRALNGALMEKRTNRESKDQSAANLKITSKSVFTWEDVCYDVPVPSGTRRLLQSVYGYVQPGKLTALMGASGAGKTTLLDVLASRKNIGVISGNILVDGAPPPGSFLRTVSYAEQLDIHEPMQTVREALRFSADLRQPYETPQSEKYEYVEGIIQLLELEDLADAIIGTPETGLSVEERKRVTIGVELAAKPELLLFLDEPTSGLDSQSAFNIIRFLRKLAAAGQAILCTIHQPNSALFENFDRLLLLQRGGECVYFGDIGEDSHVLLDYFRRNGADCPPDANPAEWMLDAIGAGQTRRIGDRDWGEIWRTSSEFEQVKREIIQIKAQRAEEVRQSGGSQIIVREYATPLWHQIKVVCKRTNIVFWRSRNYGFTRLFNHVVIALVTGLAFLNLDDSRASLQYRIFVIFNVTVLPAIILQQVEPRFEFSRLVFFRESACKSYSQFAFALSMVIAELPYSILCAVCFFLPLYYIPGFQAAPSRAGYQFLMVLITELFSVTLGQMISALTPNSFIASQINPPIVIIFSLFCGVAIPRPQMPGFWRAWLYQLDPFTRLISGMVTTELHGRTVSCSPSEFNRFQAPENQTCGEYMLPFFERGGLGYLADNTTQACEYCAYKIGDEFYSAFSMSFNTRWRDLGIFLAFIGSNLIILFLAVSFMSPRCRLRYKLIYDIF.

Disordered regions lie at residues 1–57 (MDEK…EEFS) and 75–111 (KQIS…ALRG). The segment covering 8–24 (SESSNGSDVDSLSTASA) has biased composition (polar residues). N-linked (GlcNAc...) asparagine glycosylation is present at Asn12. Residues 85–95 (GKTEDVERSDS) show a composition bias toward basic and acidic residues. Residues Asn132, Asn335, and Asn451 are each glycosylated (N-linked (GlcNAc...) asparagine). The ABC transporter 1 domain maps to 163–411 (MHMLGYGKKG…FESLGFKERP (249 aa)). 7 consecutive transmembrane segments (helical) span residues 522 to 542 (FAQT…GTVW), 556 to 576 (GGLL…ELVS), 600 to 620 (IAQI…FSII), 623 to 643 (FMCG…IIVL), 664 to 684 (YAMK…GYLI), 691 to 711 (EWLR…ALMV), and 774 to 794 (FGIM…HGET). The region spanning 846–1089 (FTWEDVCYDV…LLDYFRRNGA (244 aa)) is the ABC transporter 2 domain. Position 882 to 889 (882 to 889 (GASGAGKT)) interacts with ATP. 5 helical membrane-spanning segments follow: residues 1184–1204 (YGFT…LAFL), 1211–1231 (ASLQ…AIIL), 1268–1288 (LPYS…IPGF), 1299–1319 (FLMV…ISAL), and 1325–1345 (IASQ…GVAI). N-linked (GlcNAc...) asparagine glycosylation is found at Asn1396 and Asn1418. A helical membrane pass occupies residues 1449–1469 (LGIFLAFIGSNLIILFLAVSF).

This sequence belongs to the ABC transporter superfamily. ABCG family. PDR (TC 3.A.1.205) subfamily.

The protein resides in the cell membrane. The enzyme catalyses fluconazole(in) + ATP + H2O = fluconazole(out) + ADP + phosphate + H(+). With respect to regulation, the efflux inhibitor FK506 does not impair the transport activity. Functionally, ABC efflux transporter that confers resistance to fluconazole (FLC) but shows no resistance to other azoles. Is also able to transport rhodamine 6G (R-6G), a known substrate for many ABC transporters. The chain is ABC multidrug transporter I from Aspergillus fumigatus (strain ATCC MYA-4609 / CBS 101355 / FGSC A1100 / Af293) (Neosartorya fumigata).